A 343-amino-acid polypeptide reads, in one-letter code: Heat-inducible transcription repressor HrcA (343 aa).

The protein belongs to the HrcA family.

In terms of biological role, negative regulator of class I heat shock genes (grpE-dnaK-dnaJ and groELS operons). Prevents heat-shock induction of these operons. The sequence is that of Heat-inducible transcription repressor HrcA from Natranaerobius thermophilus (strain ATCC BAA-1301 / DSM 18059 / JW/NM-WN-LF).